The following is a 1391-amino-acid chain: DNA-directed RNA polymerase subunit beta (1391 aa).

The protein belongs to the RNA polymerase beta chain family. In terms of assembly, the RNAP catalytic core consists of 2 alpha, 1 beta, 1 beta' and 1 omega subunit. When a sigma factor is associated with the core the holoenzyme is formed, which can initiate transcription.

It catalyses the reaction RNA(n) + a ribonucleoside 5'-triphosphate = RNA(n+1) + diphosphate. In terms of biological role, DNA-dependent RNA polymerase catalyzes the transcription of DNA into RNA using the four ribonucleoside triphosphates as substrates. The chain is DNA-directed RNA polymerase subunit beta from Paramagnetospirillum magneticum (strain ATCC 700264 / AMB-1) (Magnetospirillum magneticum).